The primary structure comprises 1067 residues: Carbamoyl phosphate synthase large chain (1067 aa).

Residues 1-401 (MPLNKDIKKV…AFLKGIRSLE (401 aa)) are carboxyphosphate synthetic domain. Residues Arg-129, Arg-169, Gly-175, Gly-176, Lys-208, Val-210, Glu-215, Gly-241, Ile-242, His-243, Gln-284, and Glu-298 each coordinate ATP. Residues 133–327 (RDMMNRINQP…IAKVAAKIAL (195 aa)) enclose the ATP-grasp 1 domain. Positions 284, 298, and 300 each coordinate Mg(2+). Mn(2+)-binding residues include Gln-284, Glu-298, and Asn-300. The interval 402-549 (IGKYSLEHKK…YSTYEQYDEV (148 aa)) is oligomerization domain. A carbamoyl phosphate synthetic domain region spans residues 550 to 932 (VVSDNKKVVV…ALYKGFVGAS (383 aa)). Positions 674–864 (DDLLERLNIA…IVDIATRIML (191 aa)) constitute an ATP-grasp 2 domain. Arg-710, Lys-749, Leu-751, Glu-755, Gly-780, Val-781, His-782, Ser-783, Gln-823, and Glu-835 together coordinate ATP. Positions 823, 835, and 837 each coordinate Mg(2+). Residues Gln-823, Glu-835, and Asn-837 each contribute to the Mn(2+) site. An MGS-like domain is found at 933–1067 (MYTGDKGKTI…NRELEVFNLI (135 aa)). The tract at residues 933–1067 (MYTGDKGKTI…NRELEVFNLI (135 aa)) is allosteric domain.

Belongs to the CarB family. Composed of two chains; the small (or glutamine) chain promotes the hydrolysis of glutamine to ammonia, which is used by the large (or ammonia) chain to synthesize carbamoyl phosphate. Tetramer of heterodimers (alpha,beta)4. Mg(2+) is required as a cofactor. Mn(2+) serves as cofactor.

It carries out the reaction hydrogencarbonate + L-glutamine + 2 ATP + H2O = carbamoyl phosphate + L-glutamate + 2 ADP + phosphate + 2 H(+). The enzyme catalyses hydrogencarbonate + NH4(+) + 2 ATP = carbamoyl phosphate + 2 ADP + phosphate + 2 H(+). It participates in amino-acid biosynthesis; L-arginine biosynthesis; carbamoyl phosphate from bicarbonate: step 1/1. It functions in the pathway pyrimidine metabolism; UMP biosynthesis via de novo pathway; (S)-dihydroorotate from bicarbonate: step 1/3. In terms of biological role, large subunit of the glutamine-dependent carbamoyl phosphate synthetase (CPSase). CPSase catalyzes the formation of carbamoyl phosphate from the ammonia moiety of glutamine, carbonate, and phosphate donated by ATP, constituting the first step of 2 biosynthetic pathways, one leading to arginine and/or urea and the other to pyrimidine nucleotides. The large subunit (synthetase) binds the substrates ammonia (free or transferred from glutamine from the small subunit), hydrogencarbonate and ATP and carries out an ATP-coupled ligase reaction, activating hydrogencarbonate by forming carboxy phosphate which reacts with ammonia to form carbamoyl phosphate. The protein is Carbamoyl phosphate synthase large chain of Clostridium perfringens (strain 13 / Type A).